The following is a 156-amino-acid chain: Small ribosomal subunit protein uS7 (156 aa).

The protein belongs to the universal ribosomal protein uS7 family. Part of the 30S ribosomal subunit. Contacts proteins S9 and S11.

Functionally, one of the primary rRNA binding proteins, it binds directly to 16S rRNA where it nucleates assembly of the head domain of the 30S subunit. Is located at the subunit interface close to the decoding center, probably blocks exit of the E-site tRNA. The polypeptide is Small ribosomal subunit protein uS7 (Geotalea daltonii (strain DSM 22248 / JCM 15807 / FRC-32) (Geobacter daltonii)).